We begin with the raw amino-acid sequence, 337 residues long: 5-dehydro-2-deoxygluconokinase (337 aa).

The protein belongs to the carbohydrate kinase PfkB family.

The enzyme catalyses 5-dehydro-2-deoxy-D-gluconate + ATP = 6-phospho-5-dehydro-2-deoxy-D-gluconate + ADP + H(+). It participates in polyol metabolism; myo-inositol degradation into acetyl-CoA; acetyl-CoA from myo-inositol: step 5/7. Functionally, catalyzes the phosphorylation of 5-dehydro-2-deoxy-D-gluconate (2-deoxy-5-keto-D-gluconate or DKG) to 6-phospho-5-dehydro-2-deoxy-D-gluconate (DKGP). This chain is 5-dehydro-2-deoxygluconokinase, found in Geobacillus thermodenitrificans (strain NG80-2).